We begin with the raw amino-acid sequence, 254 residues long: Imidazole glycerol phosphate synthase subunit HisF (254 aa).

Catalysis depends on residues Asp12 and Asp131.

This sequence belongs to the HisA/HisF family. Heterodimer of HisH and HisF.

Its subcellular location is the cytoplasm. It catalyses the reaction 5-[(5-phospho-1-deoxy-D-ribulos-1-ylimino)methylamino]-1-(5-phospho-beta-D-ribosyl)imidazole-4-carboxamide + L-glutamine = D-erythro-1-(imidazol-4-yl)glycerol 3-phosphate + 5-amino-1-(5-phospho-beta-D-ribosyl)imidazole-4-carboxamide + L-glutamate + H(+). It participates in amino-acid biosynthesis; L-histidine biosynthesis; L-histidine from 5-phospho-alpha-D-ribose 1-diphosphate: step 5/9. IGPS catalyzes the conversion of PRFAR and glutamine to IGP, AICAR and glutamate. The HisF subunit catalyzes the cyclization activity that produces IGP and AICAR from PRFAR using the ammonia provided by the HisH subunit. This is Imidazole glycerol phosphate synthase subunit HisF from Rhizorhabdus wittichii (strain DSM 6014 / CCUG 31198 / JCM 15750 / NBRC 105917 / EY 4224 / RW1) (Sphingomonas wittichii).